The following is a 39-amino-acid chain: Large ribosomal subunit protein bL12 (39 aa).

Belongs to the bacterial ribosomal protein bL12 family. As to quaternary structure, homodimer. Part of the ribosomal stalk of the 50S ribosomal subunit. Forms a multimeric L10(L12)X complex, where L10 forms an elongated spine to which 2 to 4 L12 dimers bind in a sequential fashion. Binds GTP-bound translation factors.

Functionally, forms part of the ribosomal stalk which helps the ribosome interact with GTP-bound translation factors. Is thus essential for accurate translation. The chain is Large ribosomal subunit protein bL12 (rplL) from Arthrobacter glacialis.